Consider the following 152-residue polypeptide: Xanthine-guanine phosphoribosyltransferase (152 aa).

5-phospho-alpha-D-ribose 1-diphosphate contacts are provided by residues 37–38, Arg-69, and 88–96; these read RG and DDLVDTGGT. Arg-69 serves as a coordination point for GMP. Asp-89 contacts Mg(2+). Guanine contacts are provided by Asp-92 and Ile-135. 2 residues coordinate xanthine: Asp-92 and Ile-135. GMP-binding positions include 92–96 and 134–135; these read DTGGT and WI.

This sequence belongs to the purine/pyrimidine phosphoribosyltransferase family. XGPT subfamily. In terms of assembly, homotetramer. Requires Mg(2+) as cofactor.

The protein localises to the cell inner membrane. It catalyses the reaction GMP + diphosphate = guanine + 5-phospho-alpha-D-ribose 1-diphosphate. The catalysed reaction is XMP + diphosphate = xanthine + 5-phospho-alpha-D-ribose 1-diphosphate. It carries out the reaction IMP + diphosphate = hypoxanthine + 5-phospho-alpha-D-ribose 1-diphosphate. Its pathway is purine metabolism; GMP biosynthesis via salvage pathway; GMP from guanine: step 1/1. It functions in the pathway purine metabolism; XMP biosynthesis via salvage pathway; XMP from xanthine: step 1/1. In terms of biological role, purine salvage pathway enzyme that catalyzes the transfer of the ribosyl-5-phosphate group from 5-phospho-alpha-D-ribose 1-diphosphate (PRPP) to the N9 position of the 6-oxopurines guanine and xanthine to form the corresponding ribonucleotides GMP (guanosine 5'-monophosphate) and XMP (xanthosine 5'-monophosphate), with the release of PPi. To a lesser extent, also acts on hypoxanthine. The chain is Xanthine-guanine phosphoribosyltransferase from Pectobacterium atrosepticum (strain SCRI 1043 / ATCC BAA-672) (Erwinia carotovora subsp. atroseptica).